We begin with the raw amino-acid sequence, 460 residues long: tRNA modification GTPase MnmE (460 aa).

(6S)-5-formyl-5,6,7,8-tetrahydrofolate is bound by residues arginine 26, glutamate 88, and arginine 127. The 160-residue stretch at 222–381 (GLKVAIVGRP…LESAILSKVQ (160 aa)) folds into the TrmE-type G domain. Asparagine 232 serves as a coordination point for K(+). Residues 232–237 (NVGKSS), 251–257 (TELPGTT), and 276–279 (DTAG) each bind GTP. Serine 236 lines the Mg(2+) pocket. The K(+) site is built by threonine 251, leucine 253, and threonine 256. Residue threonine 257 coordinates Mg(2+). Lysine 460 contributes to the (6S)-5-formyl-5,6,7,8-tetrahydrofolate binding site.

Belongs to the TRAFAC class TrmE-Era-EngA-EngB-Septin-like GTPase superfamily. TrmE GTPase family. As to quaternary structure, homodimer. Heterotetramer of two MnmE and two MnmG subunits. The cofactor is K(+).

The protein localises to the cytoplasm. Functionally, exhibits a very high intrinsic GTPase hydrolysis rate. Involved in the addition of a carboxymethylaminomethyl (cmnm) group at the wobble position (U34) of certain tRNAs, forming tRNA-cmnm(5)s(2)U34. This is tRNA modification GTPase MnmE from Cyanothece sp. (strain PCC 7425 / ATCC 29141).